We begin with the raw amino-acid sequence, 352 residues long: Sphingosine 1-phosphate receptor 2 (352 aa).

The Extracellular segment spans residues 1–34 (MGGLYSEYLNPEKVLEHYNYTKETLDMQETTSRK). Asparagine 19 is a glycosylation site (N-linked (GlcNAc...) asparagine). The chain crosses the membrane as a helical span at residues 35–59 (VASAFIIILCCAIVVENLLVLIAVA). The Cytoplasmic segment spans residues 60–66 (RNSKFHS). Residues 67–95 (AMYLFLGNLAASDLLAGVAFVANTLLSGH) traverse the membrane as a helical segment. The Extracellular portion of the chain corresponds to 96–109 (VTLSLTPVQWFARE). A helical transmembrane segment spans residues 110 to 128 (GSAFITLSASVFSLLAIAI). The Cytoplasmic portion of the chain corresponds to 129–147 (ERQVALAKVKLYGSDKSCR). A helical membrane pass occupies residues 148–173 (MLMLIGASWLISLILGGLPILGWNCL). Topologically, residues 174–189 (NQLEACSTVLPLYAKH) are extracellular. A helical transmembrane segment spans residues 190 to 210 (YVLCVVTIFSVILLAIVALYV). The Cytoplasmic segment spans residues 211 to 233 (RIYFVVRSSHADVAGPQTLALLK). Residues 234-255 (TVTIVLGVFIICWLPAFSILLL) form a helical membrane-spanning segment. Over 256-271 (DSTCPVRACPVLYKAH) the chain is Extracellular. Residues 272–292 (YFFAFATLNSLLNPVIYTWRS) traverse the membrane as a helical segment. The Cytoplasmic segment spans residues 293-352 (RDLRREVLRPLQCWRRGKGVTGRRGGNPGHRLLPLRSSSSLERGMHMPTSPTFLEGNTVV). A lipid anchor (S-palmitoyl cysteine) is attached at cysteine 305. The segment at 333–352 (LERGMHMPTSPTFLEGNTVV) is disordered.

It belongs to the G-protein coupled receptor 1 family. In terms of tissue distribution, most abundant in heart and lung; low, but clearly observed in kidney, liver and thymus; much lower but detectable in brain, testis, stomach and intestine. Not significantly detected in any of the sections of embryonic day (E) 14-18, except in embryonic brain.

It is found in the cell membrane. Its function is as follows. Receptor for the lysosphingolipid sphingosine 1-phosphate (S1P). S1P is a bioactive lysophospholipid that elicits diverse physiological effects on most types of cells and tissues. Receptor for the chemokine-like protein FAM19A5. Mediates the inhibitory effect of FAM19A5 on vascular smooth muscle cell proliferation and migration. In lymphoid follicles, couples the binding of S1P to the activation of GNA13 and downstream inhibition of AKT activation leading to suppression of germinal center (GC) B cell growth and migration outside the GC niche. In Mus musculus (Mouse), this protein is Sphingosine 1-phosphate receptor 2 (S1pr2).